Reading from the N-terminus, the 387-residue chain is Putative serine/threonine-protein kinase (387 aa).

The Protein kinase domain occupies 15 to 344 (YQIEKLLNRG…ERVLEGQVEI (330 aa)). ATP-binding positions include 21–29 (LNRGGMDSY) and K55. The active-site Proton acceptor is D164. Helical transmembrane passes span 232–252 (PPNA…MLVG) and 363–383 (SIFT…LLIF).

This sequence belongs to the protein kinase superfamily. Ser/Thr protein kinase family.

The protein resides in the cell membrane. It catalyses the reaction L-seryl-[protein] + ATP = O-phospho-L-seryl-[protein] + ADP + H(+). It carries out the reaction L-threonyl-[protein] + ATP = O-phospho-L-threonyl-[protein] + ADP + H(+). This is Putative serine/threonine-protein kinase from Mycoplasma genitalium (strain ATCC 33530 / DSM 19775 / NCTC 10195 / G37) (Mycoplasmoides genitalium).